Consider the following 222-residue polypeptide: Thiamine-phosphate synthase (222 aa).

4-amino-2-methyl-5-(diphosphooxymethyl)pyrimidine is bound by residues 44–48 and N75; that span reads QVRMK. Mg(2+) contacts are provided by D76 and D95. Residue T114 coordinates 4-amino-2-methyl-5-(diphosphooxymethyl)pyrimidine. 140–142 serves as a coordination point for 2-[(2R,5Z)-2-carboxy-4-methylthiazol-5(2H)-ylidene]ethyl phosphate; it reads SRS. K143 contacts 4-amino-2-methyl-5-(diphosphooxymethyl)pyrimidine. 2-[(2R,5Z)-2-carboxy-4-methylthiazol-5(2H)-ylidene]ethyl phosphate is bound at residue G171.

Belongs to the thiamine-phosphate synthase family. Mg(2+) serves as cofactor.

The enzyme catalyses 2-[(2R,5Z)-2-carboxy-4-methylthiazol-5(2H)-ylidene]ethyl phosphate + 4-amino-2-methyl-5-(diphosphooxymethyl)pyrimidine + 2 H(+) = thiamine phosphate + CO2 + diphosphate. It carries out the reaction 2-(2-carboxy-4-methylthiazol-5-yl)ethyl phosphate + 4-amino-2-methyl-5-(diphosphooxymethyl)pyrimidine + 2 H(+) = thiamine phosphate + CO2 + diphosphate. The catalysed reaction is 4-methyl-5-(2-phosphooxyethyl)-thiazole + 4-amino-2-methyl-5-(diphosphooxymethyl)pyrimidine + H(+) = thiamine phosphate + diphosphate. Its pathway is cofactor biosynthesis; thiamine diphosphate biosynthesis; thiamine phosphate from 4-amino-2-methyl-5-diphosphomethylpyrimidine and 4-methyl-5-(2-phosphoethyl)-thiazole: step 1/1. Condenses 4-methyl-5-(beta-hydroxyethyl)thiazole monophosphate (THZ-P) and 2-methyl-4-amino-5-hydroxymethyl pyrimidine pyrophosphate (HMP-PP) to form thiamine monophosphate (TMP). This Anaeromyxobacter dehalogenans (strain 2CP-C) protein is Thiamine-phosphate synthase.